The sequence spans 363 residues: Phospho-N-acetylmuramoyl-pentapeptide-transferase (363 aa).

Transmembrane regions (helical) follow at residues 13–33 (ISGIALASLLAVGLGTTAFFL), 49–69 (LPLLLCAMGSGVVGFWVIPLL), 95–115 (MGGIFFIPVGVIIACILSNFA), 119–139 (LAVSALTTSYGFIGWLDDWQI), 154–174 (LALQVGFAAVFCLWLMFNQPS), 183–203 (WVSFTLPLGFLFWPLAGFVLV), 224–244 (AIALLALGALIAPTAPGLMVF), 281–301 (AVALLTNTLVALFILSGIFFV), and 343–363 (ELQVVGVFYVIAAILAAICLA).

Belongs to the glycosyltransferase 4 family. MraY subfamily. Mg(2+) serves as cofactor.

Its subcellular location is the cell inner membrane. The catalysed reaction is UDP-N-acetyl-alpha-D-muramoyl-L-alanyl-gamma-D-glutamyl-meso-2,6-diaminopimeloyl-D-alanyl-D-alanine + di-trans,octa-cis-undecaprenyl phosphate = di-trans,octa-cis-undecaprenyl diphospho-N-acetyl-alpha-D-muramoyl-L-alanyl-D-glutamyl-meso-2,6-diaminopimeloyl-D-alanyl-D-alanine + UMP. The protein operates within cell wall biogenesis; peptidoglycan biosynthesis. Catalyzes the initial step of the lipid cycle reactions in the biosynthesis of the cell wall peptidoglycan: transfers peptidoglycan precursor phospho-MurNAc-pentapeptide from UDP-MurNAc-pentapeptide onto the lipid carrier undecaprenyl phosphate, yielding undecaprenyl-pyrophosphoryl-MurNAc-pentapeptide, known as lipid I. The protein is Phospho-N-acetylmuramoyl-pentapeptide-transferase of Nostoc punctiforme (strain ATCC 29133 / PCC 73102).